We begin with the raw amino-acid sequence, 97 residues long: Large ribosomal subunit protein eL21 (97 aa).

The segment at 1–26 (MQKSEGFRSKTRYKLQKHPRQKGMAP) is disordered. Basic residues predominate over residues 9 to 21 (SKTRYKLQKHPRQ).

It belongs to the eukaryotic ribosomal protein eL21 family.

The polypeptide is Large ribosomal subunit protein eL21 (Methanococcus maripaludis (strain C5 / ATCC BAA-1333)).